Here is a 238-residue protein sequence, read N- to C-terminus: 1-(5-phosphoribosyl)-5-[(5-phosphoribosylamino)methylideneamino] imidazole-4-carboxamide isomerase (238 aa).

The active-site Proton acceptor is D8. The active-site Proton donor is the D129.

The protein belongs to the HisA/HisF family.

The protein resides in the cytoplasm. The catalysed reaction is 1-(5-phospho-beta-D-ribosyl)-5-[(5-phospho-beta-D-ribosylamino)methylideneamino]imidazole-4-carboxamide = 5-[(5-phospho-1-deoxy-D-ribulos-1-ylimino)methylamino]-1-(5-phospho-beta-D-ribosyl)imidazole-4-carboxamide. It functions in the pathway amino-acid biosynthesis; L-histidine biosynthesis; L-histidine from 5-phospho-alpha-D-ribose 1-diphosphate: step 4/9. In Paracoccus denitrificans (strain Pd 1222), this protein is 1-(5-phosphoribosyl)-5-[(5-phosphoribosylamino)methylideneamino] imidazole-4-carboxamide isomerase.